The sequence spans 785 residues: Endonuclease MutS2 (785 aa).

ATP is bound at residue 331–338 (GPNTGGKT). Residues 710-785 (LDLRGLYADE…GLGVTVVELA (76 aa)) form the Smr domain.

Belongs to the DNA mismatch repair MutS family. MutS2 subfamily. As to quaternary structure, homodimer. Binds to stalled ribosomes, contacting rRNA.

In terms of biological role, endonuclease that is involved in the suppression of homologous recombination and thus may have a key role in the control of bacterial genetic diversity. Acts as a ribosome collision sensor, splitting the ribosome into its 2 subunits. Detects stalled/collided 70S ribosomes which it binds and splits by an ATP-hydrolysis driven conformational change. Acts upstream of the ribosome quality control system (RQC), a ribosome-associated complex that mediates the extraction of incompletely synthesized nascent chains from stalled ribosomes and their subsequent degradation. Probably generates substrates for RQC. In Pelotomaculum thermopropionicum (strain DSM 13744 / JCM 10971 / SI), this protein is Endonuclease MutS2.